We begin with the raw amino-acid sequence, 1012 residues long: Axonemal dynein light chain domain-containing protein 1 (1012 aa).

Over residues 1–17 (MSLPKTPSTPLNSTSTS) the composition is skewed to low complexity. The interval 1–34 (MSLPKTPSTPLNSTSTSESKKLKVSVAKEGTRGL) is disordered. 3 coiled-coil regions span residues 317-402 (QRIL…IWSS), 447-486 (EDLA…IVKD), and 572-597 (SERQ…RING). Positions 841-854 (PEIDESFKEDEEES) are enriched in acidic residues. Disordered regions lie at residues 841–879 (PEID…TEKE) and 963–1012 (LEEL…KKGH). 2 stretches are compositionally biased toward basic and acidic residues: residues 855–879 (KEDR…TEKE) and 963–987 (LEEL…REVK). The segment covering 988-997 (EEEEQQEEEE) has biased composition (acidic residues).

As to expression, highly expressed in testis. Highly expressed in the round and late spermatids.

The protein localises to the cytoplasm. May be essential for spermiogenesis and male fertility probably by regulating the manchette dynamics, spermatid head shaping and sperm flagellum assembly. This chain is Axonemal dynein light chain domain-containing protein 1, found in Homo sapiens (Human).